The primary structure comprises 450 residues: Sulfite exporter TauE/SafE family protein 1 (450 aa).

12 helical membrane-spanning segments follow: residues 5–25 (LVPL…SALA), 48–68 (TIEV…AASI), 70–90 (SAGG…IAGL), 97–117 (SFSA…NLFL), 130–150 (FDLA…GVIC), 153–173 (MFPN…STMK), 223–243 (FPWM…SINL), 261–281 (ALYW…TLCI), 316–336 (VMAL…GMLI), 340–360 (LLQI…MVLF), 378–398 (GTAA…LMVV), and 408–428 (ASII…LMTT).

Belongs to the 4-toluene sulfonate uptake permease (TSUP) (TC 2.A.102) family.

The protein localises to the membrane. The sequence is that of Sulfite exporter TauE/SafE family protein 1 from Arabidopsis thaliana (Mouse-ear cress).